A 148-amino-acid chain; its full sequence is Lysozyme C-1 (148 aa).

A signal peptide spans 1–18; sequence MKALLTLGLLLLSVTAQA. The C-type lysozyme domain maps to 19 to 148; that stretch reads KVYNRCELAR…LSQYIRNCGV (130 aa). Cystine bridges form between cysteine 24–cysteine 146, cysteine 48–cysteine 134, cysteine 83–cysteine 99, and cysteine 95–cysteine 113. Catalysis depends on residues glutamate 53 and aspartate 71.

Belongs to the glycosyl hydrolase 22 family. As to quaternary structure, monomer. In terms of tissue distribution, expressed strongly only in small intestine.

It is found in the secreted. It catalyses the reaction Hydrolysis of (1-&gt;4)-beta-linkages between N-acetylmuramic acid and N-acetyl-D-glucosamine residues in a peptidoglycan and between N-acetyl-D-glucosamine residues in chitodextrins.. Lysozymes have primarily a bacteriolytic function; those in tissues and body fluids are associated with the monocyte-macrophage system and enhance the activity of immunoagents. Lyz1 is active against a range of Gram-positive and Gram-negative bacteria. Less effective than Lyz2 in killing Gram-negative bacteria. Lyz1 and Lyz2 are equally effective in killing Gram-positive bacteria. This Mus musculus (Mouse) protein is Lysozyme C-1 (Lyz1).